Reading from the N-terminus, the 200-residue chain is Recombination protein RecR (200 aa).

Residues Cys57–Cys72 form a C4-type zinc finger. A Toprim domain is found at Thr80–Pro175.

The protein belongs to the RecR family.

In terms of biological role, may play a role in DNA repair. It seems to be involved in an RecBC-independent recombinational process of DNA repair. It may act with RecF and RecO. This chain is Recombination protein RecR, found in Pseudomonas fluorescens (strain ATCC BAA-477 / NRRL B-23932 / Pf-5).